The primary structure comprises 499 residues: Glutamyl-tRNA(Gln) amidotransferase subunit A (499 aa).

Catalysis depends on charge relay system residues Lys-79 and Ser-159. Residue Ser-183 is the Acyl-ester intermediate of the active site.

It belongs to the amidase family. GatA subfamily. Heterotrimer of A, B and C subunits.

The enzyme catalyses L-glutamyl-tRNA(Gln) + L-glutamine + ATP + H2O = L-glutaminyl-tRNA(Gln) + L-glutamate + ADP + phosphate + H(+). Allows the formation of correctly charged Gln-tRNA(Gln) through the transamidation of misacylated Glu-tRNA(Gln) in organisms which lack glutaminyl-tRNA synthetase. The reaction takes place in the presence of glutamine and ATP through an activated gamma-phospho-Glu-tRNA(Gln). The protein is Glutamyl-tRNA(Gln) amidotransferase subunit A of Granulibacter bethesdensis (strain ATCC BAA-1260 / CGDNIH1).